We begin with the raw amino-acid sequence, 82 residues long: Small ribosomal subunit protein bS18 (82 aa).

The tract at residues 1 to 20 is disordered; it reads MAEVSSSTVRRPFHRRRKTC.

Belongs to the bacterial ribosomal protein bS18 family. Part of the 30S ribosomal subunit. Forms a tight heterodimer with protein bS6.

In terms of biological role, binds as a heterodimer with protein bS6 to the central domain of the 16S rRNA, where it helps stabilize the platform of the 30S subunit. This chain is Small ribosomal subunit protein bS18, found in Allorhizobium ampelinum (strain ATCC BAA-846 / DSM 112012 / S4) (Agrobacterium vitis (strain S4)).